Here is a 275-residue protein sequence, read N- to C-terminus: Calcium uniporter protein, mitochondrial (275 aa).

Residues 1–28 (MNSFVIRNGFGLVRTFNTRLFTTSTQNL) constitute a mitochondrion transit peptide. Over 29–165 (EGELKTILGQ…DRKAHRRATA (137 aa)) the chain is Mitochondrial matrix. Residues 125–157 (VGLNKLIESKKSEINSLRQKIQPLEEKKQVIDR) are a coiled coil. The helical transmembrane segment at 166 to 186 (IIWTGLGYCFAQAAILARLTW) threads the bilayer. The Mitochondrial intermembrane portion of the chain corresponds to 187–192 (WDLSWD). Residues 191–199 (WDIIEPVSY) carry the Selectivity filter motif. Residues 193–213 (IIEPVSYFLTFGSVLIGYTYF) traverse the membrane as a helical segment. Ca(2+) is bound at residue E195. Topologically, residues 214 to 275 (TMTKTEFTYE…ELATKYDHTH (62 aa)) are mitochondrial matrix. Residues 244-270 (PKEDYENLVQAIDKKEKELKELELATK) adopt a coiled-coil conformation.

Belongs to the MCU (TC 1.A.77) family. As to quaternary structure, homooligomer.

It is found in the mitochondrion inner membrane. The catalysed reaction is Ca(2+)(in) = Ca(2+)(out). Its activity is regulated as follows. Inhibited by ruthenium red or its derivative Ru360. Mitochondrial inner membrane calcium uniporter that mediates calcium uptake into mitochondria. Constitutes a pore-forming and calcium-conducting subunit. Mitochondrial calcium homeostasis plays key roles in cellular physiology and regulates cell bioenergetics, cytoplasmic calcium signals and activation of cell death pathways. Sufficient to operate as a pore-forming channel without the need of calcium-sensor or auxiliary subunit. The sequence is that of Calcium uniporter protein, mitochondrial from Dictyostelium discoideum (Social amoeba).